The chain runs to 315 residues: Kinetochore protein SPC25 homolog (315 aa).

Met1 bears the N-acetylmethionine mark. The stretch at Thr57 to Arg91 forms a coiled coil. Residues Ala261 to Lys315 are disordered. A compositionally biased stretch (polar residues) spans Phe266–Pro275. Over residues Ser280–Lys289 the composition is skewed to basic residues.

The protein belongs to the SPC25 family. In terms of assembly, component of the NDC80 complex, which consists of NDC80, NUF2, SPC24 and SPC25.

It is found in the chromosome. It localises to the centromere. Acts as a component of the essential kinetochore-associated NDC80 complex, which is required for chromosome segregation and spindle checkpoint activity to ensure proper cell division. The sequence is that of Kinetochore protein SPC25 homolog from Arabidopsis thaliana (Mouse-ear cress).